A 147-amino-acid polypeptide reads, in one-letter code: Small ribosomal subunit protein uS12 (147 aa).

This sequence belongs to the universal ribosomal protein uS12 family. Part of the 30S ribosomal subunit.

With S4 and S5 plays an important role in translational accuracy. Located at the interface of the 30S and 50S subunits. The protein is Small ribosomal subunit protein uS12 of Staphylothermus marinus (strain ATCC 43588 / DSM 3639 / JCM 9404 / F1).